Here is a 351-residue protein sequence, read N- to C-terminus: Histidinol-phosphate aminotransferase (351 aa).

N6-(pyridoxal phosphate)lysine is present on K221.

Belongs to the class-II pyridoxal-phosphate-dependent aminotransferase family. Histidinol-phosphate aminotransferase subfamily. Homodimer. Pyridoxal 5'-phosphate serves as cofactor.

It carries out the reaction L-histidinol phosphate + 2-oxoglutarate = 3-(imidazol-4-yl)-2-oxopropyl phosphate + L-glutamate. The protein operates within amino-acid biosynthesis; L-histidine biosynthesis; L-histidine from 5-phospho-alpha-D-ribose 1-diphosphate: step 7/9. The chain is Histidinol-phosphate aminotransferase from Staphylococcus epidermidis (strain ATCC 35984 / DSM 28319 / BCRC 17069 / CCUG 31568 / BM 3577 / RP62A).